The primary structure comprises 571 residues: Proline--tRNA ligase (571 aa).

This sequence belongs to the class-II aminoacyl-tRNA synthetase family. ProS type 1 subfamily. As to quaternary structure, homodimer.

It is found in the cytoplasm. The catalysed reaction is tRNA(Pro) + L-proline + ATP = L-prolyl-tRNA(Pro) + AMP + diphosphate. Functionally, catalyzes the attachment of proline to tRNA(Pro) in a two-step reaction: proline is first activated by ATP to form Pro-AMP and then transferred to the acceptor end of tRNA(Pro). As ProRS can inadvertently accommodate and process non-cognate amino acids such as alanine and cysteine, to avoid such errors it has two additional distinct editing activities against alanine. One activity is designated as 'pretransfer' editing and involves the tRNA(Pro)-independent hydrolysis of activated Ala-AMP. The other activity is designated 'posttransfer' editing and involves deacylation of mischarged Ala-tRNA(Pro). The misacylated Cys-tRNA(Pro) is not edited by ProRS. In Pediococcus pentosaceus (strain ATCC 25745 / CCUG 21536 / LMG 10740 / 183-1w), this protein is Proline--tRNA ligase.